The primary structure comprises 118 residues: Large ribosomal subunit protein uL18 (118 aa).

The tract at residues 1-25 (MISKPDKNKIRQKRHRRVRGKLSGT) is disordered. Over residues 10-20 (IRQKRHRRVRG) the composition is skewed to basic residues.

Belongs to the universal ribosomal protein uL18 family. Part of the 50S ribosomal subunit; part of the 5S rRNA/L5/L18/L25 subcomplex. Contacts the 5S and 23S rRNAs.

In terms of biological role, this is one of the proteins that bind and probably mediate the attachment of the 5S RNA into the large ribosomal subunit, where it forms part of the central protuberance. This is Large ribosomal subunit protein uL18 from Streptococcus pyogenes serotype M5 (strain Manfredo).